A 99-amino-acid chain; its full sequence is MTDADMSVLNEVFDVIMDRKNNPVEGSYVCSLLDHRKGINKILEKVGEETAETILAVKDNDRAEIIYETSDLLFHLLVMLAATDITLDDIAEEMKKRRH.

Belongs to the PRA-PH family.

The protein resides in the cytoplasm. It catalyses the reaction 1-(5-phospho-beta-D-ribosyl)-ATP + H2O = 1-(5-phospho-beta-D-ribosyl)-5'-AMP + diphosphate + H(+). It participates in amino-acid biosynthesis; L-histidine biosynthesis; L-histidine from 5-phospho-alpha-D-ribose 1-diphosphate: step 2/9. The polypeptide is Phosphoribosyl-ATP pyrophosphatase (Methanococcoides burtonii (strain DSM 6242 / NBRC 107633 / OCM 468 / ACE-M)).